A 279-amino-acid polypeptide reads, in one-letter code: Proteasome subunit beta 2 (279 aa).

A propeptide spans 1–53 (removed in mature form; by autocatalysis); the sequence is MAAAFDPSGRFPDLFTSVGTSSFSAFLSKAAPELLPGRRPLPPGMATGLTPHA. The active-site Nucleophile is threonine 54.

It belongs to the peptidase T1B family. The 20S proteasome core is composed of 14 alpha and 14 beta subunits that assemble into four stacked heptameric rings, resulting in a barrel-shaped structure. The two inner rings, each composed of seven catalytic beta subunits, are sandwiched by two outer rings, each composed of seven alpha subunits. The catalytic chamber with the active sites is on the inside of the barrel. Has a gated structure, the ends of the cylinder being occluded by the N-termini of the alpha-subunits. Is capped by the proteasome-associated ATPase, ARC.

The protein localises to the cytoplasm. It catalyses the reaction Cleavage of peptide bonds with very broad specificity.. The protein operates within protein degradation; proteasomal Pup-dependent pathway. Its activity is regulated as follows. The formation of the proteasomal ATPase ARC-20S proteasome complex, likely via the docking of the C-termini of ARC into the intersubunit pockets in the alpha-rings, may trigger opening of the gate for substrate entry. Interconversion between the open-gate and close-gate conformations leads to a dynamic regulation of the 20S proteasome proteolysis activity. In terms of biological role, component of the proteasome core, a large protease complex with broad specificity involved in protein degradation. The protein is Proteasome subunit beta 2 of Salinispora tropica (strain ATCC BAA-916 / DSM 44818 / JCM 13857 / NBRC 105044 / CNB-440).